The sequence spans 429 residues: MATVVIVGSQWGDEGKGKMTDYLSQEANVVVRSQGGDNAGHTIEFDRQKFALRLIPSGIFGENTTAVIGNGVVINPQALLEEIKYLTDRGVDISGLKISSRAQVIMPYHLLLDECQEKAKGAAKIGTTKKGIGPTYVDKVSRIGIRVADLLEKDTFAAKLKQNLEIKNQLFTKIYGVDPVDFDEIFNQYYEYGQQIKQYVTDTSLLVNDAIDRGDKVLFEGAQGTMLDIDEGTYPYVTSSNPTAGGAPTGAGVGPNKIETVVGIAKAYTTRVGEGPFPTELNDEIGDYIRETGHEYGTVTGRPRRVGWFDAVAMRHARRVNGMTYLSLNLLDVLTGLKTIKIARAYELDGQEINYYPASLAELDRCTPLYEEVPGWEEDITQVTDYEDLPANAKHFLDRIVELSETPLATISVGPSREQTIILRDPWRG.

GTP contacts are provided by residues 12–18 (GDEGKGK) and 40–42 (GHT). D13 acts as the Proton acceptor in catalysis. Residues D13 and G40 each contribute to the Mg(2+) site. IMP contacts are provided by residues 13–16 (DEGK), 38–41 (NAGH), T128, R142, Q223, T238, and R302. Residue H41 is the Proton donor of the active site. 298 to 304 (TVTGRPR) is a binding site for substrate. Residues R304, 330-332 (LLD), and 412-414 (SVG) contribute to the GTP site.

The protein belongs to the adenylosuccinate synthetase family. In terms of assembly, homodimer. Mg(2+) is required as a cofactor.

Its subcellular location is the cytoplasm. It catalyses the reaction IMP + L-aspartate + GTP = N(6)-(1,2-dicarboxyethyl)-AMP + GDP + phosphate + 2 H(+). The protein operates within purine metabolism; AMP biosynthesis via de novo pathway; AMP from IMP: step 1/2. Plays an important role in the de novo pathway of purine nucleotide biosynthesis. Catalyzes the first committed step in the biosynthesis of AMP from IMP. The polypeptide is Adenylosuccinate synthetase (Limosilactobacillus fermentum (strain NBRC 3956 / LMG 18251) (Lactobacillus fermentum)).